The primary structure comprises 721 residues: Catalase-peroxidase 1 (721 aa).

Residues 98 to 226 constitute a cross-link (tryptophyl-tyrosyl-methioninium (Trp-Tyr) (with M-252)); it reads WHAAGTYRIA…LAAVMMGLIY (129 aa). His99 acts as the Proton acceptor in catalysis. Positions 226–252 form a cross-link, tryptophyl-tyrosyl-methioninium (Tyr-Met) (with W-98); sequence YVNPEGVDGQPDPLKTAHDVRVTFARM. Position 267 (His267) interacts with heme b.

Belongs to the peroxidase family. Peroxidase/catalase subfamily. As to quaternary structure, homodimer or homotetramer. The cofactor is heme b. Post-translationally, formation of the three residue Trp-Tyr-Met cross-link is important for the catalase, but not the peroxidase activity of the enzyme.

It catalyses the reaction H2O2 + AH2 = A + 2 H2O. The catalysed reaction is 2 H2O2 = O2 + 2 H2O. In terms of biological role, bifunctional enzyme with both catalase and broad-spectrum peroxidase activity. The sequence is that of Catalase-peroxidase 1 from Vibrio parahaemolyticus serotype O3:K6 (strain RIMD 2210633).